The chain runs to 232 residues: LexA repressor (232 aa).

Residues 26-46 (FDEMKDALDLRSKSGIHRLIT) constitute a DNA-binding region (H-T-H motif). Residues serine 153 and lysine 191 each act as for autocatalytic cleavage activity in the active site.

Belongs to the peptidase S24 family. As to quaternary structure, homodimer.

The enzyme catalyses Hydrolysis of Ala-|-Gly bond in repressor LexA.. In terms of biological role, represses a number of genes involved in the response to DNA damage (SOS response), including recA and lexA. In the presence of single-stranded DNA, RecA interacts with LexA causing an autocatalytic cleavage which disrupts the DNA-binding part of LexA, leading to derepression of the SOS regulon and eventually DNA repair. In Bradyrhizobium sp. (strain BTAi1 / ATCC BAA-1182), this protein is LexA repressor.